We begin with the raw amino-acid sequence, 580 residues long: Sensor histidine kinase YvrG (580 aa).

Topologically, residues Met1–Lys6 are cytoplasmic. Residues Phe7–Val27 traverse the membrane as a helical segment. The Extracellular segment spans residues Ala28 to Ala261. A helical membrane pass occupies residues Met262–Phe282. The Cytoplasmic segment spans residues Arg283–Gln580. Positions Gly363 to Gln580 constitute a Histidine kinase domain. His366 bears the Phosphohistidine; by autocatalysis mark.

The protein localises to the cell membrane. It carries out the reaction ATP + protein L-histidine = ADP + protein N-phospho-L-histidine.. In terms of biological role, member of the two-component regulatory system YvrG/YvrH that positively regulates 7 transcriptional units (wprA, wapA-yxxG, dltABCDE, sunA, sunT-bdbA-yolJ-bdbB, sigO-rsoA, and sigX-rsiX), and negatively regulates the lytABC operon. Probably activates YvrH by phosphorylation. The polypeptide is Sensor histidine kinase YvrG (yvrG) (Bacillus subtilis (strain 168)).